The sequence spans 250 residues: Ubiquinone/menaquinone biosynthesis C-methyltransferase UbiE (250 aa).

Residues Thr73, Asp94, 122 to 123 (NA), and Ser139 contribute to the S-adenosyl-L-methionine site.

Belongs to the class I-like SAM-binding methyltransferase superfamily. MenG/UbiE family.

It carries out the reaction a 2-demethylmenaquinol + S-adenosyl-L-methionine = a menaquinol + S-adenosyl-L-homocysteine + H(+). The catalysed reaction is a 2-methoxy-6-(all-trans-polyprenyl)benzene-1,4-diol + S-adenosyl-L-methionine = a 5-methoxy-2-methyl-3-(all-trans-polyprenyl)benzene-1,4-diol + S-adenosyl-L-homocysteine + H(+). The protein operates within quinol/quinone metabolism; menaquinone biosynthesis; menaquinol from 1,4-dihydroxy-2-naphthoate: step 2/2. It participates in cofactor biosynthesis; ubiquinone biosynthesis. Methyltransferase required for the conversion of demethylmenaquinol (DMKH2) to menaquinol (MKH2) and the conversion of 2-polyprenyl-6-methoxy-1,4-benzoquinol (DDMQH2) to 2-polyprenyl-3-methyl-6-methoxy-1,4-benzoquinol (DMQH2). The chain is Ubiquinone/menaquinone biosynthesis C-methyltransferase UbiE from Francisella tularensis subsp. mediasiatica (strain FSC147).